A 36-amino-acid chain; its full sequence is Protein YmgL (36 aa).

The chain is Protein YmgL from Escherichia coli (strain K12).